A 549-amino-acid polypeptide reads, in one-letter code: Cytoplasmic trehalase (549 aa).

Residues arginine 168, 175–176, asparagine 212, 221–223, 292–294, and glycine 324 each bind substrate; these read WD, RSQ, and RDE. Catalysis depends on proton donor/acceptor residues aspartate 326 and glutamate 509. Glutamate 525 contacts substrate.

This sequence belongs to the glycosyl hydrolase 37 family. As to quaternary structure, monomer.

The protein localises to the cytoplasm. The catalysed reaction is alpha,alpha-trehalose + H2O = alpha-D-glucose + beta-D-glucose. Its pathway is glycan degradation; trehalose degradation; D-glucose from alpha,alpha-trehalose: step 1/1. Hydrolyzes trehalose to glucose. Could be involved, in cells returning to low osmolarity conditions, in the utilization of the accumulated cytoplasmic trehalose, which was synthesized in response to high osmolarity. The chain is Cytoplasmic trehalase from Salmonella typhi.